A 309-amino-acid polypeptide reads, in one-letter code: 4-diphosphocytidyl-2-C-methyl-D-erythritol kinase (309 aa).

Residue K11 is part of the active site. P94–A104 is a binding site for ATP. Residue D136 is part of the active site.

It belongs to the GHMP kinase family. IspE subfamily.

The enzyme catalyses 4-CDP-2-C-methyl-D-erythritol + ATP = 4-CDP-2-C-methyl-D-erythritol 2-phosphate + ADP + H(+). It functions in the pathway isoprenoid biosynthesis; isopentenyl diphosphate biosynthesis via DXP pathway; isopentenyl diphosphate from 1-deoxy-D-xylulose 5-phosphate: step 3/6. Its function is as follows. Catalyzes the phosphorylation of the position 2 hydroxy group of 4-diphosphocytidyl-2C-methyl-D-erythritol. The chain is 4-diphosphocytidyl-2-C-methyl-D-erythritol kinase from Synechococcus sp. (strain JA-3-3Ab) (Cyanobacteria bacterium Yellowstone A-Prime).